The sequence spans 710 residues: Conserved oligomeric Golgi complex subunit 2 (710 aa).

It belongs to the COG2 family. Component of the conserved oligomeric Golgi complex which is composed of eight different subunits and is required for normal Golgi morphology and localization.

It localises to the golgi apparatus membrane. In terms of biological role, required for normal Golgi morphology and function. This is Conserved oligomeric Golgi complex subunit 2 from Drosophila melanogaster (Fruit fly).